A 243-amino-acid chain; its full sequence is Variant surface antigen E (243 aa).

Residues 1 to 29 (MKKSIFSKKLLVSFGSLVTLAAIPLIAIS) form the signal peptide. A lipid anchor (N-palmitoyl cysteine) is attached at Cys30. A lipid anchor (S-diacylglycerol cysteine) is attached at Cys30. The interval 34–243 (TDNLSQSQQP…TTSDGQNQNK (210 aa)) is disordered. Over residues 52–92 (GTNTENGSNNGSGSGTTNSSGGTNQSGSASGNGSSNSSVST) the composition is skewed to low complexity. Residues 93–243 (PDGQHSNPSN…TTSDGQNQNK (151 aa)) show a composition bias toward polar residues. A run of 11 repeats spans residues 97–109 (HSNPSNPTTSDPK), 110–122 (ESNPSNPTTSDPK), 123–135 (ESNPSNPTTSDGQ), 136–148 (HSNPSNPTTSDPK), 149–161 (ESNPSNPTTSDGQ), 162–174 (HSNPSNPTTSDGQ), 175–187 (HSNPSNPTTSDGQ), 188–200 (HSNPSNPTTSDGQ), 201–213 (HSNPSNPTTSDGQ), 214–226 (HSNPSNPTTSDGQ), and 227–239 (HSNPSNPTTSDGQ). Residues 97-239 (HSNPSNPTTS…PSNPTTSDGQ (143 aa)) form an 11 X 13 AA tandem repeats region.

It localises to the cell membrane. Functionally, responsible for the antigenic diversity for host adaptation. Expression in E.coli of a construct containing vlpD, vlpE, and vlpF yields antigenically distinguishable products corresponding to each gene. The sequence is that of Variant surface antigen E (vlpE) from Mesomycoplasma hyorhinis (Mycoplasma hyorhinis).